The primary structure comprises 167 residues: Protein-export protein SecB (167 aa).

This sequence belongs to the SecB family. Homotetramer, a dimer of dimers. One homotetramer interacts with 1 SecA dimer.

It is found in the cytoplasm. In terms of biological role, one of the proteins required for the normal export of preproteins out of the cell cytoplasm. It is a molecular chaperone that binds to a subset of precursor proteins, maintaining them in a translocation-competent state. It also specifically binds to its receptor SecA. In Cellvibrio japonicus (strain Ueda107) (Pseudomonas fluorescens subsp. cellulosa), this protein is Protein-export protein SecB.